The sequence spans 194 residues: Probable GTP-binding protein EngB (194 aa).

The region spanning 22 to 194 (GKPEIALVGR…EVWHWIEQHI (173 aa)) is the EngB-type G domain. Residues 30–37 (GRSNVGKS), 57–61 (GKTQT), 75–78 (DVPG), 142–145 (TKSD), and 175–177 (FSS) each bind GTP. Mg(2+)-binding residues include Ser37 and Thr59.

The protein belongs to the TRAFAC class TrmE-Era-EngA-EngB-Septin-like GTPase superfamily. EngB GTPase family. Requires Mg(2+) as cofactor.

In terms of biological role, necessary for normal cell division and for the maintenance of normal septation. The chain is Probable GTP-binding protein EngB from Leuconostoc mesenteroides subsp. mesenteroides (strain ATCC 8293 / DSM 20343 / BCRC 11652 / CCM 1803 / JCM 6124 / NCDO 523 / NBRC 100496 / NCIMB 8023 / NCTC 12954 / NRRL B-1118 / 37Y).